The primary structure comprises 109 residues: Fluoride-specific ion channel FluC 1 (109 aa).

Helical transmembrane passes span 1-21 (MVIVYLAIACGFGALVRYFFS), 29-49 (LPLGTLIANLLGCFLIGVFYN), 55-75 (EVYAILATGFCGGLTTFSTLN), and 87-107 (VFYSYLILTYLGGLVAIFLGI). Gly-66 and Thr-69 together coordinate Na(+).

This sequence belongs to the fluoride channel Fluc/FEX (TC 1.A.43) family.

The protein localises to the cell membrane. The enzyme catalyses fluoride(in) = fluoride(out). Na(+) is not transported, but it plays an essential structural role and its presence is essential for fluoride channel function. Fluoride-specific ion channel. Important for reducing fluoride concentration in the cell, thus reducing its toxicity. The chain is Fluoride-specific ion channel FluC 1 from Streptococcus pneumoniae (strain ATCC BAA-255 / R6).